We begin with the raw amino-acid sequence, 442 residues long: PTS system oligo-beta-mannoside-specific EIIC component (442 aa).

The 407-residue stretch at 5–411 (ISQFLVPIAG…LIVFVIWFPF (407 aa)) folds into the PTS EIIC type-3 domain. Transmembrane regions (helical) follow at residues 28 to 48 (AFML…LTNL), 67 to 87 (FGIA…FGIG), 97 to 117 (EAVF…PFII), 138 to 157 (GMFL…RRIV), 177 to 197 (FAAL…NVMV), 205 to 225 (MHDV…SGII), 228 to 248 (LIAV…QIII), 286 to 306 (TVGM…LIFM), 329 to 349 (PIIF…WVLA), 365 to 385 (LVPP…INGI), and 391 to 411 (IMGG…WFPF).

It localises to the cell membrane. Its function is as follows. The phosphoenolpyruvate-dependent sugar phosphotransferase system (sugar PTS), a major carbohydrate active transport system, catalyzes the phosphorylation of incoming sugar substrates concomitantly with their translocation across the cell membrane. The enzyme II GmuABC PTS system is involved in the transport of oligo-glucomannans such as cellobiose or mannobiose. The protein is PTS system oligo-beta-mannoside-specific EIIC component of Bacillus subtilis (strain 168).